We begin with the raw amino-acid sequence, 334 residues long: Mitochondrial glycine transporter (334 aa).

Solcar repeat units follow at residues 22–106, 135–219, and 237–321; these read SKTT…LRQG, LSNW…LKRR, and SSSS…LILR. Helical transmembrane passes span 28–53, 81–107, 141–166, 194–217, 241–267, and 296–314; these read FVAGLCSGLTSSILLQPADLLKTRVQ, GTLPSALRTGFGSALYFTSLNALRQGI, LATGAIARVAAGFVMMPVTVLKVRYE, GFGATAARDAPYAGLYVLFYEQLK, INFVSGGLAAGLATAITNPFDAVKTRL, and GLGLRITRKALSSALAWTV.

This sequence belongs to the mitochondrial carrier (TC 2.A.29) family. SLC25A38 subfamily.

Its subcellular location is the mitochondrion inner membrane. The catalysed reaction is glycine(in) = glycine(out). Its function is as follows. Mitochondrial glycine transporter that imports glycine into the mitochondrial matrix. Plays an important role in providing glycine for the first enzymatic step in heme biosynthesis, the condensation of glycine with succinyl-CoA to produce 5-aminolevulinate (ALA) in the mitochondrial matrix. The chain is Mitochondrial glycine transporter from Aspergillus clavatus (strain ATCC 1007 / CBS 513.65 / DSM 816 / NCTC 3887 / NRRL 1 / QM 1276 / 107).